The chain runs to 432 residues: Trigger factor (432 aa).

One can recognise a PPIase FKBP-type domain in the interval 161–246; that stretch reads EDRVTIDFTG…LKKVEERELP (86 aa).

The protein belongs to the FKBP-type PPIase family. Tig subfamily.

It localises to the cytoplasm. It carries out the reaction [protein]-peptidylproline (omega=180) = [protein]-peptidylproline (omega=0). Involved in protein export. Acts as a chaperone by maintaining the newly synthesized protein in an open conformation. Functions as a peptidyl-prolyl cis-trans isomerase. The protein is Trigger factor of Salmonella typhi.